A 353-amino-acid chain; its full sequence is S-adenosylmethionine:tRNA ribosyltransferase-isomerase (353 aa).

Belongs to the QueA family. In terms of assembly, monomer.

It localises to the cytoplasm. The catalysed reaction is 7-aminomethyl-7-carbaguanosine(34) in tRNA + S-adenosyl-L-methionine = epoxyqueuosine(34) in tRNA + adenine + L-methionine + 2 H(+). It participates in tRNA modification; tRNA-queuosine biosynthesis. Transfers and isomerizes the ribose moiety from AdoMet to the 7-aminomethyl group of 7-deazaguanine (preQ1-tRNA) to give epoxyqueuosine (oQ-tRNA). In Burkholderia vietnamiensis (strain G4 / LMG 22486) (Burkholderia cepacia (strain R1808)), this protein is S-adenosylmethionine:tRNA ribosyltransferase-isomerase.